The primary structure comprises 353 residues: Nicotinate-nucleotide--dimethylbenzimidazole phosphoribosyltransferase (353 aa).

The active-site Proton acceptor is the Glu-318.

Belongs to the CobT family.

The catalysed reaction is 5,6-dimethylbenzimidazole + nicotinate beta-D-ribonucleotide = alpha-ribazole 5'-phosphate + nicotinate + H(+). Its pathway is nucleoside biosynthesis; alpha-ribazole biosynthesis; alpha-ribazole from 5,6-dimethylbenzimidazole: step 1/2. Functionally, catalyzes the synthesis of alpha-ribazole-5'-phosphate from nicotinate mononucleotide (NAMN) and 5,6-dimethylbenzimidazole (DMB). This is Nicotinate-nucleotide--dimethylbenzimidazole phosphoribosyltransferase from Roseiflexus sp. (strain RS-1).